We begin with the raw amino-acid sequence, 321 residues long: Lipoyl synthase (321 aa).

Positions 68, 73, 79, 94, 98, 101, and 308 each coordinate [4Fe-4S] cluster. Residues 80–297 (FNHGTATFMI…KVLADELGFT (218 aa)) enclose the Radical SAM core domain.

It belongs to the radical SAM superfamily. Lipoyl synthase family. It depends on [4Fe-4S] cluster as a cofactor.

It localises to the cytoplasm. It catalyses the reaction [[Fe-S] cluster scaffold protein carrying a second [4Fe-4S](2+) cluster] + N(6)-octanoyl-L-lysyl-[protein] + 2 oxidized [2Fe-2S]-[ferredoxin] + 2 S-adenosyl-L-methionine + 4 H(+) = [[Fe-S] cluster scaffold protein] + N(6)-[(R)-dihydrolipoyl]-L-lysyl-[protein] + 4 Fe(3+) + 2 hydrogen sulfide + 2 5'-deoxyadenosine + 2 L-methionine + 2 reduced [2Fe-2S]-[ferredoxin]. It participates in protein modification; protein lipoylation via endogenous pathway; protein N(6)-(lipoyl)lysine from octanoyl-[acyl-carrier-protein]: step 2/2. In terms of biological role, catalyzes the radical-mediated insertion of two sulfur atoms into the C-6 and C-8 positions of the octanoyl moiety bound to the lipoyl domains of lipoate-dependent enzymes, thereby converting the octanoylated domains into lipoylated derivatives. The protein is Lipoyl synthase of Shewanella denitrificans (strain OS217 / ATCC BAA-1090 / DSM 15013).